We begin with the raw amino-acid sequence, 318 residues long: 2-oxoacid:ferredoxin oxidoreductase 1, subunit beta (318 aa).

The [4Fe-4S] cluster site is built by Cys-18, Cys-21, and Cys-52. Thiamine diphosphate is bound by residues 50-53 and His-69; that span reads IGCS. Asp-94 is a binding site for Mg(2+). Residue 95–96 participates in thiamine diphosphate binding; it reads GD. Mg(2+)-binding residues include Asn-122 and Val-124. A thiamine diphosphate-binding site is contributed by 126 to 127; the sequence is GL. A [4Fe-4S] cluster-binding site is contributed by Cys-201.

In terms of assembly, heterodimer composed of an alpha and a beta subunit. Requires [4Fe-4S] cluster as cofactor. The cofactor is thiamine diphosphate. Mg(2+) serves as cofactor.

The enzyme catalyses a 2-oxocarboxylate + 2 oxidized [2Fe-2S]-[ferredoxin] + CoA = an acyl-CoA + 2 reduced [2Fe-2S]-[ferredoxin] + CO2 + H(+). In terms of biological role, catalyzes the coenzyme A-dependent oxidative decarboxylation of different 2-oxoacids such as pyruvate, 2-oxobutyrate and glyoxylate to form their CoA derivatives. In Aeropyrum pernix (strain ATCC 700893 / DSM 11879 / JCM 9820 / NBRC 100138 / K1), this protein is 2-oxoacid:ferredoxin oxidoreductase 1, subunit beta.